Consider the following 912-residue polypeptide: Probable dipeptidyl-aminopeptidase B (912 aa).

2 disordered regions span residues 1–30 (MAAE…SNSL) and 48–68 (NGST…DYSD). Residues 1–92 (MAAEKGGSSD…GGKPVQKKVK (92 aa)) are Cytoplasmic-facing. Composition is skewed to basic and acidic residues over residues 7–25 (GSSD…EYRD) and 54–67 (TGPD…RDYS). A helical; Signal-anchor for type II membrane protein membrane pass occupies residues 93–113 (IVLGFLLFLCLSGWSLAFVLF). At 114–912 (LFGGHESSKT…RAATWVGMSI (799 aa)) the chain is on the vacuolar side. 5 N-linked (GlcNAc...) asparagine glycosylation sites follow: asparagine 130, asparagine 210, asparagine 346, asparagine 569, and asparagine 656. The active-site Charge relay system is serine 751. An N-linked (GlcNAc...) asparagine glycan is attached at asparagine 810. Residues aspartate 828 and histidine 861 each act as charge relay system in the active site. An N-linked (GlcNAc...) asparagine glycan is attached at asparagine 897.

The protein belongs to the peptidase S9B family.

The protein localises to the vacuole membrane. The catalysed reaction is Release of an N-terminal dipeptide, Xaa-Yaa-|-Zaa-, from a polypeptide, preferentially when Yaa is Pro, provided Zaa is neither Pro nor hydroxyproline.. In terms of biological role, type IV dipeptidyl-peptidase which removes N-terminal dipeptides sequentially from polypeptides having unsubstituted N-termini provided that the penultimate residue is proline. The chain is Probable dipeptidyl-aminopeptidase B (DAPB) from Paracoccidioides brasiliensis (strain Pb18).